The sequence spans 302 residues: Nudix hydrolase 22, chloroplastic (302 aa).

Residues Met1 to Leu25 constitute a chloroplast transit peptide. In terms of domain architecture, Nudix hydrolase spans Pro73–Thr229. The short motif at Lys114–Gly135 is the Nudix box element. Positions 129 and 133 each coordinate Mg(2+).

It belongs to the Nudix hydrolase family. Mg(2+) is required as a cofactor. The cofactor is Mn(2+). In terms of tissue distribution, expressed in roots, leaves, stems and inflorescences.

It is found in the plastid. The protein localises to the chloroplast. In terms of biological role, probably mediates the hydrolysis of some nucleoside diphosphate derivatives. The polypeptide is Nudix hydrolase 22, chloroplastic (NUDT22) (Arabidopsis thaliana (Mouse-ear cress)).